Reading from the N-terminus, the 419-residue chain is Putative zinc metalloprotease spr0242 (419 aa).

A Zn(2+)-binding site is contributed by histidine 18. Glutamate 19 is a catalytic residue. Histidine 22 contacts Zn(2+). The next 3 helical transmembrane spans lie at 169–191, 345–367, and 388–410; these read LITNFAGPMNNFILGVVVFWVLI, ILYFLAMISINIGIFNLIPIPAL, and EIETYVTLAGVVIMVVLMIAVTW.

The protein belongs to the peptidase M50B family. The cofactor is Zn(2+).

The protein resides in the cell membrane. This Streptococcus pneumoniae (strain ATCC BAA-255 / R6) protein is Putative zinc metalloprotease spr0242.